The following is a 137-amino-acid chain: Large-conductance mechanosensitive channel (137 aa).

The next 2 helical transmembrane spans lie at phenylalanine 10 to glycine 30 and glycine 76 to isoleucine 96.

This sequence belongs to the MscL family. As to quaternary structure, homopentamer.

Its subcellular location is the cell inner membrane. Its function is as follows. Channel that opens in response to stretch forces in the membrane lipid bilayer. May participate in the regulation of osmotic pressure changes within the cell. The polypeptide is Large-conductance mechanosensitive channel (Escherichia coli O45:K1 (strain S88 / ExPEC)).